The following is a 1282-amino-acid chain: Indigoidine synthase (1282 aa).

The adenylation stretch occupies residues 24–379 (AQRVAEHPEA…GGIQLARGYL (356 aa)). Positions 937-1012 (APRTETEKEI…KLARRLEREV (76 aa)) constitute a Carrier domain. O-(pantetheine 4'-phosphoryl)serine is present on Ser-972. A thioesterase region spans residues 1030–1138 (RPVICWPGLG…APGSPKVRAE (109 aa)).

This sequence belongs to the ATP-dependent AMP-binding enzyme family. Pantetheine 4'-phosphate serves as cofactor.

It carries out the reaction 2 FMN + 2 L-glutamine + 2 ATP + O2 = indigoidine + 2 FMNH2 + 2 AMP + 2 diphosphate + 2 H2O. It catalyses the reaction FMN + L-glutamine + ATP = 3-amino-1,5-dihydropyridine-2,6-dione + FMNH2 + AMP + diphosphate. The enzyme catalyses 2 3-amino-1,5-dihydropyridine-2,6-dione + O2 = indigoidine + 2 H2O. It functions in the pathway pigment biosynthesis. Nonribosomal peptide synthetase involved in the biosynthesis of the blue pigment indigoidine. Catalyzes the synthesis of the blue pigment using L-Gln as a substrate. Two glutamine molecules are cyclized and oxidized to form indigoidine. The sequence is that of Indigoidine synthase from Streptomyces lavendulae.